A 487-amino-acid polypeptide reads, in one-letter code: L-tartrate/succinate antiporter (487 aa).

Helical transmembrane passes span Tyr10–Glu30, Thr33–Pro53, Gly54–Phe74, Trp93–Gly113, Thr137–Ser157, Ile189–Leu209, Phe236–Val256, Leu292–Val312, Gly313–Ser333, Val340–Ile360, Ser370–Leu390, Phe393–Leu413, Ile418–Thr438, and Ile465–Val485.

It belongs to the SLC13A/DASS transporter (TC 2.A.47) family. DIT1 subfamily.

Its subcellular location is the cell inner membrane. The catalysed reaction is (2R,3R)-tartrate(out) + succinate(in) = (2R,3R)-tartrate(in) + succinate(out). Its function is as follows. Catalyzes the uptake of tartrate in exchange for intracellular succinate. Essential for anaerobic L-tartrate fermentation. This Escherichia coli O157:H7 protein is L-tartrate/succinate antiporter (ttdT).